The chain runs to 111 residues: uncharacterized protein (111 aa).

Residues 1–85 (MTGLMKAFQK…TSSREDEQKL (85 aa)) are disordered. The segment covering 11 to 23 (LSPTKRQYAEITQ) has biased composition (polar residues). A compositionally biased stretch (low complexity) spans 24–42 (SNSSISSSSSGSKYNDSSS). Polar residues predominate over residues 56-77 (ARASTSTQAQKPASSQQKGGTS).

This is an uncharacterized protein from Microplitis demolitor (Parasitoid wasp).